Here is a 220-residue protein sequence, read N- to C-terminus: Probable cytidylate kinase (220 aa).

An ATP-binding site is contributed by G10–S18.

This sequence belongs to the cytidylate kinase family. Type 1 subfamily.

The catalysed reaction is CMP + ATP = CDP + ADP. It catalyses the reaction dCMP + ATP = dCDP + ADP. The protein is Probable cytidylate kinase of Encephalitozoon cuniculi (strain GB-M1) (Microsporidian parasite).